The following is a 728-amino-acid chain: E3 ubiquitin-protein ligase LNX (728 aa).

The RING-type zinc finger occupies 45 to 83; it reads CHICLQALLDPLDTPCGHTYCTLCLTNFLVEKDFCPVDR. The NPXY motif signature appears at 185–188; sequence NPAY. The disordered stretch occupies residues 185–220; the sequence is NPAYVSSVEDGEPVANSSDSGRSNRTRARPFERSTM. The interval 186–244 is interaction with MAGEB18; sequence PAYVSSVEDGEPVANSSDSGRSNRTRARPFERSTMRSRSFKKINRALSALRRTKSGSVV. PDZ domains are found at residues 278–362 and 385–467; these read SIKI…VLRE and HVIL…VSRQ. Position 445 is a phosphoserine (S445). The tract at residues 481-500 is disordered; the sequence is WISNGQQSPGPGERNTASKP. 2 PDZ domains span residues 508–593 and 638–723; these read VVSV…ALEV and DVIL…IASW.

Interacts with CXADR. Interacts with MAGEB18 and MAGEF1. Interacts with the phosphotyrosine interaction domain of all isoforms of NUMB. IGSF5/JAM4 interacts with isoform 2 through the second PDZ domain, other isoforms may also interact with IGSF5/JAM4. Isoform 1 and isoform 2 are expressed in the heart. Isoform 1 is also expressed in kidney, lung and skeletal muscle while isoform 2 is also expressed in brain.

It localises to the cytoplasm. It carries out the reaction S-ubiquitinyl-[E2 ubiquitin-conjugating enzyme]-L-cysteine + [acceptor protein]-L-lysine = [E2 ubiquitin-conjugating enzyme]-L-cysteine + N(6)-ubiquitinyl-[acceptor protein]-L-lysine.. Its pathway is protein modification; protein ubiquitination. Its function is as follows. E3 ubiquitin-protein ligase that mediates ubiquitination and subsequent proteasomal degradation of NUMB. E3 ubiquitin ligases accept ubiquitin from an E2 ubiquitin-conjugating enzyme in the form of a thioester and then directly transfers the ubiquitin to targeted substrates. Mediates ubiquitination of isoform p66 and isoform p72 of NUMB, but not that of isoform p71 or isoform p65. Isoform 2 provides an endocytic scaffold for IGSF5/JAM4. The sequence is that of E3 ubiquitin-protein ligase LNX (Lnx1) from Mus musculus (Mouse).